We begin with the raw amino-acid sequence, 198 residues long: Holliday junction branch migration complex subunit RuvA (198 aa).

The interval 1 to 63 (MYDYIKGQLT…EDAQLLFGFH (63 aa)) is domain I. A domain II region spans residues 64 to 142 (SEEEKDVFLK…EAPKEESSKL (79 aa)). The interval 143-147 (PKAKH) is flexible linker. Residues 148–198 (QENEQLDEAIEALLALGYKATELKKIRAFFEGTSETAEQYIKSALKMLMKG) are domain III.

The protein belongs to the RuvA family. As to quaternary structure, homotetramer. Forms an RuvA(8)-RuvB(12)-Holliday junction (HJ) complex. HJ DNA is sandwiched between 2 RuvA tetramers; dsDNA enters through RuvA and exits via RuvB. An RuvB hexamer assembles on each DNA strand where it exits the tetramer. Each RuvB hexamer is contacted by two RuvA subunits (via domain III) on 2 adjacent RuvB subunits; this complex drives branch migration. In the full resolvosome a probable DNA-RuvA(4)-RuvB(12)-RuvC(2) complex forms which resolves the HJ.

It is found in the cytoplasm. The RuvA-RuvB-RuvC complex processes Holliday junction (HJ) DNA during genetic recombination and DNA repair, while the RuvA-RuvB complex plays an important role in the rescue of blocked DNA replication forks via replication fork reversal (RFR). RuvA specifically binds to HJ cruciform DNA, conferring on it an open structure. The RuvB hexamer acts as an ATP-dependent pump, pulling dsDNA into and through the RuvAB complex. HJ branch migration allows RuvC to scan DNA until it finds its consensus sequence, where it cleaves and resolves the cruciform DNA. The sequence is that of Holliday junction branch migration complex subunit RuvA from Streptococcus equi subsp. zooepidemicus (strain MGCS10565).